The chain runs to 179 residues: Ribosome-recycling factor (179 aa).

This sequence belongs to the RRF family.

It is found in the cytoplasm. Functionally, responsible for the release of ribosomes from messenger RNA at the termination of protein biosynthesis. May increase the efficiency of translation by recycling ribosomes from one round of translation to another. This Chlamydia trachomatis serovar L2b (strain UCH-1/proctitis) protein is Ribosome-recycling factor.